The sequence spans 473 residues: Cysteine--tRNA ligase (473 aa).

Residue cysteine 30 participates in Zn(2+) binding. Residues 32–42 carry the 'HIGH' region motif; it reads MTVYDYCHIGH. Zn(2+) is bound by residues cysteine 213, histidine 238, and glutamate 242. The short motif at 270-274 is the 'KMSKS' region element; that stretch reads KMSKS. Lysine 273 contributes to the ATP binding site.

Belongs to the class-I aminoacyl-tRNA synthetase family. Monomer. It depends on Zn(2+) as a cofactor.

The protein localises to the cytoplasm. It carries out the reaction tRNA(Cys) + L-cysteine + ATP = L-cysteinyl-tRNA(Cys) + AMP + diphosphate. This chain is Cysteine--tRNA ligase, found in Acinetobacter baumannii (strain SDF).